A 429-amino-acid polypeptide reads, in one-letter code: Glutamate-1-semialdehyde 2,1-aminomutase (429 aa).

At Lys266 the chain carries N6-(pyridoxal phosphate)lysine.

The protein belongs to the class-III pyridoxal-phosphate-dependent aminotransferase family. HemL subfamily. The cofactor is pyridoxal 5'-phosphate.

It localises to the cytoplasm. The catalysed reaction is (S)-4-amino-5-oxopentanoate = 5-aminolevulinate. The protein operates within porphyrin-containing compound metabolism; protoporphyrin-IX biosynthesis; 5-aminolevulinate from L-glutamyl-tRNA(Glu): step 2/2. The chain is Glutamate-1-semialdehyde 2,1-aminomutase (hemL) from Aeropyrum pernix (strain ATCC 700893 / DSM 11879 / JCM 9820 / NBRC 100138 / K1).